Here is a 300-residue protein sequence, read N- to C-terminus: Geranylgeranyl pyrophosphate synthase (300 aa).

Met1 is modified (N-acetylmethionine). 3 residues coordinate isopentenyl diphosphate: Lys25, Arg28, and His57. Asp64 and Asp68 together coordinate Mg(2+). Residue Arg73 coordinates dimethylallyl diphosphate. Position 74 (Arg74) interacts with isopentenyl diphosphate. Positions 151, 152, 185, 202, and 212 each coordinate dimethylallyl diphosphate.

This sequence belongs to the FPP/GGPP synthase family. As to quaternary structure, homohexamer; trimer of homodimers. It depends on Mg(2+) as a cofactor. In terms of tissue distribution, abundantly expressed in testis. Found in other tissues to a lower extent. Expressed in dermal fibroblast and skeletal muscle.

The protein resides in the cytoplasm. It localises to the perinuclear region. Its subcellular location is the myofibril. The protein localises to the sarcomere. It is found in the z line. It catalyses the reaction isopentenyl diphosphate + dimethylallyl diphosphate = (2E)-geranyl diphosphate + diphosphate. The catalysed reaction is isopentenyl diphosphate + (2E)-geranyl diphosphate = (2E,6E)-farnesyl diphosphate + diphosphate. The enzyme catalyses isopentenyl diphosphate + (2E,6E)-farnesyl diphosphate = (2E,6E,10E)-geranylgeranyl diphosphate + diphosphate. Its pathway is isoprenoid biosynthesis; farnesyl diphosphate biosynthesis; farnesyl diphosphate from geranyl diphosphate and isopentenyl diphosphate: step 1/1. The protein operates within isoprenoid biosynthesis; geranyl diphosphate biosynthesis; geranyl diphosphate from dimethylallyl diphosphate and isopentenyl diphosphate: step 1/1. It functions in the pathway isoprenoid biosynthesis; geranylgeranyl diphosphate biosynthesis; geranylgeranyl diphosphate from farnesyl diphosphate and isopentenyl diphosphate: step 1/1. With respect to regulation, subject to product inhibition by geranylgeranyl diphosphate. In terms of biological role, catalyzes the trans-addition of the three molecules of IPP onto DMAPP to form geranylgeranyl pyrophosphate, an important precursor of carotenoids and geranylated proteins. In Homo sapiens (Human), this protein is Geranylgeranyl pyrophosphate synthase (GGPS1).